We begin with the raw amino-acid sequence, 214 residues long: Phosphoenolpyruvate guanylyltransferase (214 aa).

Threonine 148, glycine 163, and serine 166 together coordinate phosphoenolpyruvate.

The protein belongs to the CofC family.

The enzyme catalyses phosphoenolpyruvate + GTP + H(+) = enolpyruvoyl-2-diphospho-5'-guanosine + diphosphate. Its pathway is cofactor biosynthesis; coenzyme F420 biosynthesis. Its function is as follows. Guanylyltransferase that catalyzes the activation of phosphoenolpyruvate (PEP) as enolpyruvoyl-2-diphospho-5'-guanosine, via the condensation of PEP with GTP. It is involved in the biosynthesis of coenzyme F420, a hydride carrier cofactor. In Mycolicibacterium gilvum (strain PYR-GCK) (Mycobacterium gilvum (strain PYR-GCK)), this protein is Phosphoenolpyruvate guanylyltransferase.